Reading from the N-terminus, the 238-residue chain is tRNA (guanine-N(7)-)-methyltransferase (238 aa).

E68, E93, D120, and D143 together coordinate S-adenosyl-L-methionine. Residue D143 is part of the active site. Residues K147, D179, and 216–219 each bind substrate; that span reads TKFE.

This sequence belongs to the class I-like SAM-binding methyltransferase superfamily. TrmB family.

The enzyme catalyses guanosine(46) in tRNA + S-adenosyl-L-methionine = N(7)-methylguanosine(46) in tRNA + S-adenosyl-L-homocysteine. It functions in the pathway tRNA modification; N(7)-methylguanine-tRNA biosynthesis. In terms of biological role, catalyzes the formation of N(7)-methylguanine at position 46 (m7G46) in tRNA. This Shewanella baltica (strain OS195) protein is tRNA (guanine-N(7)-)-methyltransferase.